We begin with the raw amino-acid sequence, 152 residues long: UPF0266 membrane protein YobD (152 aa).

3 consecutive transmembrane segments (helical) span residues 6-26, 45-65, and 67-87; these read LVLI…QFIM, VDSV…VTSH, and AQMT…IFWI.

Belongs to the UPF0266 family.

It is found in the cell inner membrane. The chain is UPF0266 membrane protein YobD from Salmonella paratyphi B (strain ATCC BAA-1250 / SPB7).